A 228-amino-acid polypeptide reads, in one-letter code: Octanoyltransferase (228 aa).

The region spanning 37 to 217 is the BPL/LPL catalytic domain; that stretch reads AGGPDTLLLL…AVCDALDGRL (181 aa). Substrate contacts are provided by residues 75–82, 147–149, and 160–162; these read RGGKITWH, AIG, and GFA. The active-site Acyl-thioester intermediate is the C178.

It belongs to the LipB family.

Its subcellular location is the cytoplasm. The catalysed reaction is octanoyl-[ACP] + L-lysyl-[protein] = N(6)-octanoyl-L-lysyl-[protein] + holo-[ACP] + H(+). The protein operates within protein modification; protein lipoylation via endogenous pathway; protein N(6)-(lipoyl)lysine from octanoyl-[acyl-carrier-protein]: step 1/2. Functionally, catalyzes the transfer of endogenously produced octanoic acid from octanoyl-acyl-carrier-protein onto the lipoyl domains of lipoate-dependent enzymes. Lipoyl-ACP can also act as a substrate although octanoyl-ACP is likely to be the physiological substrate. The chain is Octanoyltransferase from Mycolicibacterium smegmatis (strain ATCC 700084 / mc(2)155) (Mycobacterium smegmatis).